Reading from the N-terminus, the 929-residue chain is Transcription initiation factor TFIID subunit 3 (929 aa).

2 disordered regions span residues 131–152 (IVSS…TSAE) and 176–197 (LGKR…RPRL). A phosphoserine mark is found at Ser183, Ser199, Ser229, and Ser243. Disordered stretches follow at residues 221-358 (TQKI…ETIQ) and 405-578 (DPFE…PWKE). Residues 265 to 288 (TKSFTPKTKTKTSSPGQKTKSPKT) are compositionally biased toward low complexity. Lys266 carries the N6-acetyllysine modification. Ser291, Ser297, and Ser301 each carry phosphoserine. Polar residues-rich tracts occupy residues 340-358 (PNRT…ETIQ) and 434-466 (PKAS…SWTM). A Phosphothreonine modification is found at Thr501. Over residues 504–514 (PLHKVYEEKTK) the composition is skewed to basic and acidic residues. The span at 523 to 537 (KKLKKELKTKMKKKE) shows a compositional bias: basic residues. Over residues 538 to 578 (KQRDREREKDKNKDKSKEKDKVKEKEKDKETGRETKYPWKE) the composition is skewed to basic and acidic residues. Residue Lys581 forms a Glycyl lysine isopeptide (Lys-Gly) (interchain with G-Cter in SUMO2) linkage. Composition is skewed to basic and acidic residues over residues 603–612 (KLKDGLVRKE) and 621–648 (KDRE…DKMK). Residues 603–658 (KLKDGLVRKEKEKHKDKKKDREKGKKDKDKREKEKVKDKGREDKMKAPAPPLVLPP) are disordered. Residue Ser667 is modified to Phosphoserine. Residues 692–701 (EKEKVKEKEK) are compositionally biased toward basic and acidic residues. A disordered region spans residues 692–748 (EKEKVKEKEKKKDKKEKKKKKEKEKEKKEKEREKEKREREKREKEKEKHKHEKIKVE). Residues 702 to 713 (KKDKKEKKKKKE) show a composition bias toward basic residues. Residues 714–737 (KEKEKKEKEREKEKREREKREKEK) show a composition bias toward basic and acidic residues. Residue Lys746 forms a Glycyl lysine isopeptide (Lys-Gly) (interchain with G-Cter in SUMO2) linkage. Ser755 carries the phosphoserine modification. At Lys776 the chain carries N6-acetyllysine. Residues 778–787 (VPAPEAKPAP) show a composition bias toward low complexity. Residues 778–807 (VPAPEAKPAPSQNRPKTPPPAPAPAPGPML) form a disordered region. Pro residues predominate over residues 793–804 (KTPPPAPAPAPG). The segment at 865-915 (IWICPGCNKPDDGSPMIGCDDCDDWYHWPCVGIMTAPPEEMQWFCPKCANK) adopts a PHD-type zinc-finger fold. Zn(2+) contacts are provided by Cys868, Cys871, Cys883, Cys886, His891, Cys894, Cys909, and Cys912.

This sequence belongs to the TAF3 family. As to quaternary structure, component of the TFIID basal transcription factor complex, composed of TATA-box-binding protein TBP, and a number of TBP-associated factors (TAFs), including TAF1, TAF2, TAF3, TAF4, TAF5, TAF6, TAF7, TAF8, TAF9, TAF10, TAF11, TAF12 and TAF13. Interacts with TAF10 via the histone fold. Interacts with TAF13, TBP, SAP130 and GCN5L2. Interacts with TBPL2.

The protein resides in the nucleus. In terms of biological role, the TFIID basal transcription factor complex plays a major role in the initiation of RNA polymerase II (Pol II)-dependent transcription. TFIID recognizes and binds promoters with or without a TATA box via its subunit TBP, a TATA-box-binding protein, and promotes assembly of the pre-initiation complex (PIC). The TFIID complex consists of TBP and TBP-associated factors (TAFs), including TAF1, TAF2, TAF3, TAF4, TAF5, TAF6, TAF7, TAF8, TAF9, TAF10, TAF11, TAF12 and TAF13. The TFIID complex structure can be divided into 3 modules TFIID-A, TFIID-B, and TFIID-C. TAF3 forms the TFIID-A module together with TAF5 and TBP. Required in complex with TBPL2 for the differentiation of myoblasts into myocytes. The TAF3-TBPL2 complex replaces TFIID at specific promoters at an early stage in the differentiation process. The protein is Transcription initiation factor TFIID subunit 3 (TAF3) of Homo sapiens (Human).